The primary structure comprises 103 residues: MAHYKAADSKREQFRRYLEKSGVLDTLTKVLVALYEEPEKPTSALDFLKHHLGAATPENPEIELLRLELAEMKEKYEATVEENKKLKAKLVQYEPPQEEKRAE.

This sequence belongs to the AMY1 family. In terms of assembly, binds via its C-terminal region to the N-terminal region of MYC. Associates with AKAP1/S-AKAP84. Interacts with MYCBPAP. Interacts with CFAP91.

The protein resides in the cytoplasm. It localises to the nucleus. Its function is as follows. May control the transcriptional activity of MYC. Stimulates the activation of E box-dependent transcription by MYC. The sequence is that of c-Myc-binding protein (Mycbp) from Mus musculus (Mouse).